Consider the following 277-residue polypeptide: Carbonyl reductase [NADPH] 1 (277 aa).

Residues 10–34 (VTGS…GEVV), 63–64 (DI), and Asn90 each bind NADP(+). Phosphoserine is present on Ser30. Glutathione is bound by residues 95-97 (FKV) and Gln106. Residue Ser140 participates in substrate binding. Residue 193–194 (AY) coordinates glutathione. Tyr194 acts as the Proton acceptor in catalysis. NADP(+) is bound by residues 194–198 (YGVTK) and 231–233 (VRT).

This sequence belongs to the short-chain dehydrogenases/reductases (SDR) family. In terms of assembly, monomer.

The protein resides in the cytoplasm. It carries out the reaction a secondary alcohol + NADP(+) = a ketone + NADPH + H(+). The enzyme catalyses prostaglandin F2alpha + NADP(+) = prostaglandin E2 + NADPH + H(+). The catalysed reaction is prostaglandin E1 + NADP(+) = 15-oxoprostaglandin E1 + NADPH + H(+). It catalyses the reaction prostaglandin D2 + NADP(+) = 15-oxoprostaglandin D2 + NADPH + H(+). It carries out the reaction menadione + NADPH + H(+) = menadiol + NADP(+). The enzyme catalyses prostaglandin E2 + NADP(+) = 15-oxoprostaglandin E2 + NADPH + H(+). The catalysed reaction is prostaglandin F2alpha + NADP(+) = 15-oxoprostaglandin F2alpha + NADPH + H(+). It catalyses the reaction daunorubicin + NADPH + H(+) = 13-dihydrodaunorubicin + NADP(+). It carries out the reaction S-nitrosoglutathione + NADPH + H(+) = S-(hydroxysulfenamide)glutathione + NADP(+). The enzyme catalyses a primary alcohol + NADP(+) = an aldehyde + NADPH + H(+). The catalysed reaction is cortisol + NADPH + H(+) = 20beta-dihydrocortisol + NADP(+). It catalyses the reaction corticosterone + NADPH + H(+) = 20beta-dihydrocorticosterone + NADP(+). In terms of biological role, NADPH-dependent reductase with broad substrate specificity. Catalyzes the reduction of a wide variety of carbonyl compounds including quinones, prostaglandins, menadione, plus various xenobiotics. Catalyzes the reduction of the antitumor anthracyclines doxorubicin and daunorubicin to the cardiotoxic compounds doxorubicinol and daunorubicinol. Can convert prostaglandin E to prostaglandin F2-alpha. Can bind glutathione, which explains its higher affinity for glutathione-conjugated substrates. Catalyzes the reduction of S-nitrosoglutathione. In addition, participates in the glucocorticoid metabolism by catalyzing the NADPH-dependent cortisol/corticosterone into 20beta-dihydrocortisol (20b-DHF) or 20beta-corticosterone (20b-DHB), which are weak agonists of NR3C1 and NR3C2 in adipose tissue. In Macaca fascicularis (Crab-eating macaque), this protein is Carbonyl reductase [NADPH] 1.